The primary structure comprises 183 residues: RNA 2',3'-cyclic phosphodiesterase (183 aa).

H44 (proton donor) is an active-site residue. 2 consecutive short sequence motifs (HXTX) follow at residues 44–47 (HITL) and 130–133 (HMTL). The active-site Proton acceptor is H130.

It belongs to the 2H phosphoesterase superfamily. ThpR family.

It carries out the reaction a 3'-end 2',3'-cyclophospho-ribonucleotide-RNA + H2O = a 3'-end 2'-phospho-ribonucleotide-RNA + H(+). Functionally, hydrolyzes RNA 2',3'-cyclic phosphodiester to an RNA 2'-phosphomonoester. The chain is RNA 2',3'-cyclic phosphodiesterase (ytlP) from Bacillus subtilis (strain 168).